Consider the following 413-residue polypeptide: Serine hydroxymethyltransferase (413 aa).

(6S)-5,6,7,8-tetrahydrofolate is bound by residues leucine 117 and 121–123 (GHL). Lysine 226 is subject to N6-(pyridoxal phosphate)lysine. 349–351 (SPF) lines the (6S)-5,6,7,8-tetrahydrofolate pocket.

The protein belongs to the SHMT family. In terms of assembly, homodimer. The cofactor is pyridoxal 5'-phosphate.

It is found in the cytoplasm. It catalyses the reaction (6R)-5,10-methylene-5,6,7,8-tetrahydrofolate + glycine + H2O = (6S)-5,6,7,8-tetrahydrofolate + L-serine. It participates in one-carbon metabolism; tetrahydrofolate interconversion. The protein operates within amino-acid biosynthesis; glycine biosynthesis; glycine from L-serine: step 1/1. In terms of biological role, catalyzes the reversible interconversion of serine and glycine with tetrahydrofolate (THF) serving as the one-carbon carrier. This reaction serves as the major source of one-carbon groups required for the biosynthesis of purines, thymidylate, methionine, and other important biomolecules. Also exhibits THF-independent aldolase activity toward beta-hydroxyamino acids, producing glycine and aldehydes, via a retro-aldol mechanism. This Listeria monocytogenes serovar 1/2a (strain ATCC BAA-679 / EGD-e) protein is Serine hydroxymethyltransferase.